An 89-amino-acid polypeptide reads, in one-letter code: Small ribosomal subunit protein eS25A (89 aa).

Belongs to the eukaryotic ribosomal protein eS25 family. In terms of assembly, component of the small ribosomal subunit (SSU). Mature yeast ribosomes consist of a small (40S) and a large (60S) subunit. The 40S small subunit contains 1 molecule of ribosomal RNA (18S rRNA) and at least 33 different proteins. The large 60S subunit contains 3 rRNA molecules (25S, 5.8S and 5S rRNA) and at least 46 different proteins.

Its subcellular location is the cytoplasm. In terms of biological role, component of the ribosome, a large ribonucleoprotein complex responsible for the synthesis of proteins in the cell. The small ribosomal subunit (SSU) binds messenger RNAs (mRNAs) and translates the encoded message by selecting cognate aminoacyl-transfer RNA (tRNA) molecules. The large subunit (LSU) contains the ribosomal catalytic site termed the peptidyl transferase center (PTC), which catalyzes the formation of peptide bonds, thereby polymerizing the amino acids delivered by tRNAs into a polypeptide chain. The nascent polypeptides leave the ribosome through a tunnel in the LSU and interact with protein factors that function in enzymatic processing, targeting, and the membrane insertion of nascent chains at the exit of the ribosomal tunnel. This chain is Small ribosomal subunit protein eS25A (rps2502), found in Schizosaccharomyces pombe (strain 972 / ATCC 24843) (Fission yeast).